Reading from the N-terminus, the 249-residue chain is Ubiquinone/menaquinone biosynthesis C-methyltransferase UbiE (249 aa).

Residues threonine 72, aspartate 93, and aspartate 121–alanine 122 each bind S-adenosyl-L-methionine.

Belongs to the class I-like SAM-binding methyltransferase superfamily. MenG/UbiE family.

It catalyses the reaction a 2-demethylmenaquinol + S-adenosyl-L-methionine = a menaquinol + S-adenosyl-L-homocysteine + H(+). The enzyme catalyses a 2-methoxy-6-(all-trans-polyprenyl)benzene-1,4-diol + S-adenosyl-L-methionine = a 5-methoxy-2-methyl-3-(all-trans-polyprenyl)benzene-1,4-diol + S-adenosyl-L-homocysteine + H(+). The protein operates within quinol/quinone metabolism; menaquinone biosynthesis; menaquinol from 1,4-dihydroxy-2-naphthoate: step 2/2. It functions in the pathway cofactor biosynthesis; ubiquinone biosynthesis. Methyltransferase required for the conversion of demethylmenaquinol (DMKH2) to menaquinol (MKH2) and the conversion of 2-polyprenyl-6-methoxy-1,4-benzoquinol (DDMQH2) to 2-polyprenyl-3-methyl-6-methoxy-1,4-benzoquinol (DMQH2). This Saccharophagus degradans (strain 2-40 / ATCC 43961 / DSM 17024) protein is Ubiquinone/menaquinone biosynthesis C-methyltransferase UbiE.